We begin with the raw amino-acid sequence, 945 residues long: Isoleucine--tRNA ligase 1 (945 aa).

A 'HIGH' region motif is present at residues 66 to 76; that stretch reads PYANGDIHLGH. Glu-581 is a binding site for L-isoleucyl-5'-AMP. The short motif at 622-626 is the 'KMSKS' region element; it reads KMSKS. Lys-625 is an ATP binding site. Residues Cys-908, Cys-911, Cys-928, and Cys-931 each contribute to the Zn(2+) site.

It belongs to the class-I aminoacyl-tRNA synthetase family. IleS type 1 subfamily. As to quaternary structure, monomer. Zn(2+) is required as a cofactor.

The protein localises to the cytoplasm. It catalyses the reaction tRNA(Ile) + L-isoleucine + ATP = L-isoleucyl-tRNA(Ile) + AMP + diphosphate. Functionally, catalyzes the attachment of isoleucine to tRNA(Ile). As IleRS can inadvertently accommodate and process structurally similar amino acids such as valine, to avoid such errors it has two additional distinct tRNA(Ile)-dependent editing activities. One activity is designated as 'pretransfer' editing and involves the hydrolysis of activated Val-AMP. The other activity is designated 'posttransfer' editing and involves deacylation of mischarged Val-tRNA(Ile). This Burkholderia mallei (strain ATCC 23344) protein is Isoleucine--tRNA ligase 1.